The chain runs to 382 residues: GDP-mannose-dependent alpha-(1-6)-phosphatidylinositol monomannoside mannosyltransferase (382 aa).

GDP-alpha-D-mannose-binding residues include Arg200, Lys205, Ile257, and Glu294.

Belongs to the glycosyltransferase group 1 family. Glycosyltransferase 4 subfamily.

The catalysed reaction is a 1,2-diacyl-sn-glycero-3-phospho-[alpha-D-mannopyranosyl-(1&lt;-&gt;6)-D-myo-inositol] + GDP-alpha-D-mannose = a 2,6-O-bis(alpha-D-mannopyranosyl)-1-phosphatidyl-1D-myo-inositol + GDP + H(+). It carries out the reaction a 1,2-diacyl-sn-glycero-3-phospho-[alpha-D-6-acyl-mannopyranosyl-(1&lt;-&gt;6)-D-myo-inositol] + GDP-alpha-D-mannose = a 2-O-(alpha-D-mannosyl)-6-O-(6-O-acyl-alpha-D-mannosyl)-1-phosphatidyl-1D-myo-inositol + GDP + H(+). It functions in the pathway phospholipid metabolism; phosphatidylinositol metabolism. Functionally, involved in the biosynthesis of phosphatidyl-myo-inositol mannosides (PIM) which are early precursors in the biosynthesis of lipomannans (LM) and lipoarabinomannans (LAM). Catalyzes the addition of a mannosyl residue from GDP-D-mannose (GDP-Man) to the position 6 of a phosphatidyl-myo-inositol bearing an alpha-1,2-linked mannose residue (PIM1) to generate phosphatidyl-myo-inositol bearing alpha-1,2- and alpha-1,6-linked mannose residues (Ac1PIM2). PimB also catalyzes the addition of a mannosyl residue from GDP-Man to the position 6 of phosphatidyl-myo-inositol bearing an acylated alpha-1,2-linked mannose residue (Ac1PIM1) to generate monoacylated phosphatidyl-myo-inositol bearing alpha-1,2- and alpha-1,6-linked mannose residues (Ac1PIM2). The addition of the second mannosyl residue by PimB preferentially occurs before the acylation of the mannosyl residue transferred by PimA. Also able to transfer a mannosyl residue from GDP-Man to the position 6 of a phosphatidyl-myo-inositol (PI), but this reaction is very slow. The polypeptide is GDP-mannose-dependent alpha-(1-6)-phosphatidylinositol monomannoside mannosyltransferase (Mycolicibacterium smegmatis (strain ATCC 700084 / mc(2)155) (Mycobacterium smegmatis)).